Reading from the N-terminus, the 571-residue chain is Isthmin-2 (571 aa).

Residues 1 to 26 (MRALRDRAGLLLCVLLLAALLEAALG) form the signal peptide. 3 disordered regions span residues 30–60 (KKPR…LKEE), 116–141 (ANTT…LREE), and 257–294 (EKDR…DEEE). The span at 116-131 (ANTTLSTPNPDTQASA) shows a compositional bias: polar residues. The N-linked (GlcNAc...) asparagine glycan is linked to Asn117. Residues 257-268 (EKDRAPGEKGEE) are compositionally biased toward basic and acidic residues. The segment covering 269–294 (KEEDEDYPSEDIEGEDQEDKEEDEEE) has biased composition (acidic residues). N-linked (GlcNAc...) asparagine glycosylation is present at Asn300. The region spanning 327-371 (EPQKEWSPWSPCSGNCSTGKQQRTRPCGYGCTATETRTCDLPSCP) is the TSP type-1 domain. 3 disulfides stabilise this stretch: Cys338–Cys365, Cys342–Cys370, and Cys353–Cys357. N-linked (GlcNAc...) asparagine glycosylation occurs at Asn392. In terms of domain architecture, AMOP spans 396 to 559 (MHDQDVDSCE…RACTDNPLEE (164 aa)).

The protein belongs to the isthmin family. As to expression, expressed at high levels in the placenta and at moderate levels in the pancreas, kidney, heart, liver, lung, brain and skeletal muscle.

Its subcellular location is the secreted. This chain is Isthmin-2 (ISM2), found in Homo sapiens (Human).